Reading from the N-terminus, the 308-residue chain is Acetylglutamate kinase (308 aa).

Residues 73–74 (GG), arginine 95, and asparagine 194 contribute to the substrate site.

Belongs to the acetylglutamate kinase family. ArgB subfamily.

It is found in the cytoplasm. It carries out the reaction N-acetyl-L-glutamate + ATP = N-acetyl-L-glutamyl 5-phosphate + ADP. It participates in amino-acid biosynthesis; L-arginine biosynthesis; N(2)-acetyl-L-ornithine from L-glutamate: step 2/4. Functionally, catalyzes the ATP-dependent phosphorylation of N-acetyl-L-glutamate. This Rhodococcus jostii (strain RHA1) protein is Acetylglutamate kinase.